Reading from the N-terminus, the 95-residue chain is Large ribosomal subunit protein bL25 (95 aa).

The protein belongs to the bacterial ribosomal protein bL25 family. Part of the 50S ribosomal subunit; part of the 5S rRNA/L5/L18/L25 subcomplex. Contacts the 5S rRNA. Binds to the 5S rRNA independently of L5 and L18.

Functionally, this is one of the proteins that binds to the 5S RNA in the ribosome where it forms part of the central protuberance. This is Large ribosomal subunit protein bL25 from Shewanella amazonensis (strain ATCC BAA-1098 / SB2B).